Here is a 79-residue protein sequence, read N- to C-terminus: M-myrmicitoxin(01)-Tb1a (79 aa).

A signal peptide spans 1–26 (MKLSFLSLVLAIILVMALMYTPHAEA). The propeptide occupies 27-56 (KAWADADADATAAADADADAVADALADAVA). Valine 76 carries the post-translational modification Valine amide.

It belongs to the formicidae venom precursor-01 superfamily. The C-terminal amidation is important for antimicrobial activity, since a non-amidated synthetic peptide shows a reduced antimicrobial activity (2-20-fold depending on the strain tested). The amidation may play a positive role in the peptide conformation, since amidated peptide shows an increase of about 5% of helical content. Expressed by the venom gland.

It localises to the secreted. It is found in the target cell membrane. Its function is as follows. Antimicrobial peptide that shows antimicrobial activities against all microorganisms tested with minimal inhibitory concentrations (MICs) values ranging from 0.45 to 97.5 umol/L. This peptide kills the microorganisms by permeabilizating the membranes. It shows a very weak hemolytic activity (HC(50)=325 umol/L) and weak cytotoxicity against human lymphocytes (LC(50)=67.8 umol/L). Gram-negative bacteria tested are E.coli (MIC=24.4 umol/L), C.sakazakii (MIC=5.8 umol/L), P.aeruginosa (MIC=8.7-12.2 umol/L), S.enterica (MIC=5.4 umol/L), and H.pylori (MIC=0.99-3.9 umol/L). Gram-positive bacteria tested are E.hirae (MIC=12.2 umol/L), S.aureus (MIC=3.0-6.4 umol/L), methicillin-resistant S.aureus (MRSA) (MIC=8.7 umol/L), S.xylosus (MIC=0.45-1.3 umol/L), and B.subtilis (MIC=24.4 umol/L). Fungi tested are A.niger (MIC=0.75 umol/L), C.albicans (MIC=17.3 umol/L), G.candidum (MIC=97.5 umol/L), and S.cerevisiae (MIC=6.1 umol/L). Finally the parasite tested is L.infantum (MIC=1.5 umol/L). This is M-myrmicitoxin(01)-Tb1a from Tetramorium bicarinatum (Tramp ant).